A 189-amino-acid polypeptide reads, in one-letter code: Ribosome maturation factor RimP (189 aa).

It belongs to the RimP family.

Its subcellular location is the cytoplasm. In terms of biological role, required for maturation of 30S ribosomal subunits. This is Ribosome maturation factor RimP from Corynebacterium kroppenstedtii (strain DSM 44385 / JCM 11950 / CIP 105744 / CCUG 35717).